Here is a 261-residue protein sequence, read N- to C-terminus: Sepiapterin reductase (261 aa).

Methionine 1 carries the post-translational modification N-acetylmethionine. Glycine 15–glycine 21 contributes to the NADP(+) binding site. Phosphoserine is present on serine 33. Arginine 43–serine 44 is an NADP(+) binding site. Phosphoserine is present on serine 46. Aspartate 70 to leucine 71 contributes to the NADP(+) binding site. Substrate is bound by residues serine 158–leucine 159 and tyrosine 171. An NADP(+)-binding site is contributed by lysine 175. Serine 196 carries the post-translational modification Phosphoserine. Glycine 200 provides a ligand contact to substrate. Leucine 202–glutamine 207 contributes to the NADP(+) binding site. Phosphoserine is present on serine 214. Positions 222 and 258 each coordinate substrate.

This sequence belongs to the sepiapterin reductase family. Homodimer.

Its subcellular location is the cytoplasm. It carries out the reaction L-erythro-7,8-dihydrobiopterin + NADP(+) = L-sepiapterin + NADPH + H(+). The enzyme catalyses (6R)-L-erythro-5,6,7,8-tetrahydrobiopterin + 2 NADP(+) = 6-pyruvoyl-5,6,7,8-tetrahydropterin + 2 NADPH + 2 H(+). Catalyzes the final one or two reductions in tetra-hydrobiopterin biosynthesis to form 5,6,7,8-tetrahydrobiopterin. This is Sepiapterin reductase (Spr) from Mus musculus (Mouse).